The primary structure comprises 97 residues: Aspartyl/glutamyl-tRNA(Asn/Gln) amidotransferase subunit C (97 aa).

Belongs to the GatC family. In terms of assembly, heterotrimer of A, B and C subunits.

The catalysed reaction is L-glutamyl-tRNA(Gln) + L-glutamine + ATP + H2O = L-glutaminyl-tRNA(Gln) + L-glutamate + ADP + phosphate + H(+). It carries out the reaction L-aspartyl-tRNA(Asn) + L-glutamine + ATP + H2O = L-asparaginyl-tRNA(Asn) + L-glutamate + ADP + phosphate + 2 H(+). Its function is as follows. Allows the formation of correctly charged Asn-tRNA(Asn) or Gln-tRNA(Gln) through the transamidation of misacylated Asp-tRNA(Asn) or Glu-tRNA(Gln) in organisms which lack either or both of asparaginyl-tRNA or glutaminyl-tRNA synthetases. The reaction takes place in the presence of glutamine and ATP through an activated phospho-Asp-tRNA(Asn) or phospho-Glu-tRNA(Gln). The protein is Aspartyl/glutamyl-tRNA(Asn/Gln) amidotransferase subunit C of Synechococcus sp. (strain JA-3-3Ab) (Cyanobacteria bacterium Yellowstone A-Prime).